A 173-amino-acid chain; its full sequence is C-type lectin mosGCTL-7 (173 aa).

A signal peptide spans Met1–Ala24. Residues Asn51–Glu167 enclose the C-type lectin domain. Cystine bridges form between Cys59/Cys166 and Cys139/Cys158. Residues Asn119 and Asn144 are each glycosylated (N-linked (GlcNAc...) asparagine).

As to quaternary structure, interacts with putative receptor-type tyrosine-protein phosphatase mosPTP-1; the interaction may mediate the recruitment of Japanese encephalitis virus particles in complex with C-type lectin mosGCTL-7 to the cell surface.

It localises to the secreted. Its function is as follows. Carbohydrate-binding protein. (Microbial infection) Facilitates Japanese encephalitis virus infection in mosquitoes. The chain is C-type lectin mosGCTL-7 from Culex quinquefasciatus (Southern house mosquito).